The sequence spans 587 residues: Dynein axonemal intermediate chain 2 (587 aa).

4 WD repeats span residues 214 to 254, 261 to 302, 362 to 401, and 405 to 445; these read RPAS…NPVE, SHRD…EPTE, GHHGPIYSIQRNPFFPKNFLTVGDWTARIWSEDCRESSIM, and YHTS…NNPS. Disordered stretches follow at residues 519–542 and 562–587; these read LKERSKAEPGEEVKDEKPAEDMKE and KEQQEIKQSEDEHQEKEVSEEKIVHE.

This sequence belongs to the dynein intermediate chain family. In terms of assembly, consists of at least two heavy chains and a number of intermediate and light chains. Interacts with DNAAF2. Interacts with DNAAF6/PIH1D3. Interacts with HEATR2; probably involved in outer arm dynein assembly. Interacts with C16ORF71/DAAP1.

It localises to the cytoplasm. The protein resides in the cytoskeleton. The protein localises to the cilium axoneme. Its subcellular location is the dynein axonemal particle. Its function is as follows. Part of the dynein complex of multiciliated cell cilia. The polypeptide is Dynein axonemal intermediate chain 2 (dnai2) (Xenopus laevis (African clawed frog)).